The chain runs to 159 residues: Nucleotide-binding protein Pmen_0939 (159 aa).

Belongs to the YajQ family.

Functionally, nucleotide-binding protein. The protein is Nucleotide-binding protein Pmen_0939 of Ectopseudomonas mendocina (strain ymp) (Pseudomonas mendocina).